The chain runs to 499 residues: Maturase K (499 aa).

The protein belongs to the intron maturase 2 family. MatK subfamily.

It localises to the plastid. The protein resides in the chloroplast. Functionally, usually encoded in the trnK tRNA gene intron. Probably assists in splicing its own and other chloroplast group II introns. The polypeptide is Maturase K (Gymnocladus dioicus (Kentucky coffee tree)).